Reading from the N-terminus, the 348-residue chain is Phosphoribosylformylglycinamidine cyclo-ligase (348 aa).

It belongs to the AIR synthase family.

It is found in the cytoplasm. It carries out the reaction 2-formamido-N(1)-(5-O-phospho-beta-D-ribosyl)acetamidine + ATP = 5-amino-1-(5-phospho-beta-D-ribosyl)imidazole + ADP + phosphate + H(+). It participates in purine metabolism; IMP biosynthesis via de novo pathway; 5-amino-1-(5-phospho-D-ribosyl)imidazole from N(2)-formyl-N(1)-(5-phospho-D-ribosyl)glycinamide: step 2/2. The polypeptide is Phosphoribosylformylglycinamidine cyclo-ligase (Ruegeria sp. (strain TM1040) (Silicibacter sp.)).